Reading from the N-terminus, the 113-residue chain is uncharacterized protein (113 aa).

A run of 2 helical transmembrane segments spans residues 1–21 (MLIAGTLCVCAAVISAVFGTW) and 48–68 (IMLAAGGVVALVAVAHTALIV).

This sequence to M.tuberculosis Rv0039.

The protein resides in the cell membrane. This is an uncharacterized protein from Mycobacterium leprae (strain TN).